The following is a 402-amino-acid chain: Sulfate adenylyltransferase (402 aa).

The protein belongs to the sulfate adenylyltransferase family.

The catalysed reaction is sulfate + ATP + H(+) = adenosine 5'-phosphosulfate + diphosphate. It participates in sulfur metabolism; hydrogen sulfide biosynthesis; sulfite from sulfate: step 1/3. The protein is Sulfate adenylyltransferase of Ruthia magnifica subsp. Calyptogena magnifica.